Here is a 261-residue protein sequence, read N- to C-terminus: Gap junction beta-6 protein (261 aa).

Over 1 to 22 the chain is Cytoplasmic; the sequence is MDWGTLHTFVGGVNKHSTSIGK. A helical membrane pass occupies residues 23-45; that stretch reads VWVTVLFVFRVMILVVAAQEVWG. The Extracellular portion of the chain corresponds to 46–75; the sequence is DEQEDFVCNTLQPGCRNVCYDHFFPVSHIR. A helical transmembrane segment spans residues 76-98; it reads LWALQLIFVSTPALLVAMHVAYY. The Cytoplasmic portion of the chain corresponds to 99-131; it reads RHEAARRFRRGETRSEFKDLEDIKRQKVRIEGS. A helical membrane pass occupies residues 132-154; that stretch reads LWWTYTSSIFFRIVFEAAFMYVF. Residues 155-192 lie on the Extracellular side of the membrane; that stretch reads YFLYNGYHLPWVLKCGIQPCPNLVDCFISRPTEKTVFT. Residues 193-215 form a helical membrane-spanning segment; the sequence is IFMISASVICMLLNVAELCYLLL. The Cytoplasmic segment spans residues 216-261; that stretch reads KVCFRRSKRAQTQKAPPNHALKESKQNEMNELISEGGQNAITGFPS.

This sequence belongs to the connexin family. Beta-type (group I) subfamily. As to quaternary structure, a connexon is composed of a hexamer of connexins. Interacts with CNST.

The protein resides in the cell membrane. The protein localises to the cell junction. Its subcellular location is the gap junction. Its function is as follows. One gap junction consists of a cluster of closely packed pairs of transmembrane channels, the connexons, through which materials of low MW diffuse from one cell to a neighboring cell. The polypeptide is Gap junction beta-6 protein (GJB6) (Bos taurus (Bovine)).